Reading from the N-terminus, the 937-residue chain is Aconitate hydratase A (937 aa).

[4Fe-4S] cluster contacts are provided by Cys-439, Cys-505, and Cys-508. The segment at 898–921 is disordered; that stretch reads KKESKSTQSTTSKGCGSADTSSET.

It belongs to the aconitase/IPM isomerase family. Monomer. The cofactor is [4Fe-4S] cluster.

The catalysed reaction is citrate = D-threo-isocitrate. It catalyses the reaction (2S,3R)-3-hydroxybutane-1,2,3-tricarboxylate = 2-methyl-cis-aconitate + H2O. The protein operates within carbohydrate metabolism; tricarboxylic acid cycle; isocitrate from oxaloacetate: step 2/2. Its pathway is organic acid metabolism; propanoate degradation. Functionally, involved in the catabolism of short chain fatty acids (SCFA) via the tricarboxylic acid (TCA)(acetyl degradation route) and probably the 2-methylcitrate cycle I (propionate degradation route). Catalyzes the reversible isomerization of citrate to isocitrate via cis-aconitate. Could catalyze the hydration of 2-methyl-cis-aconitate to yield (2R,3S)-2-methylisocitrate. The apo form of AcnA functions as a RNA-binding regulatory protein. This chain is Aconitate hydratase A (acn), found in Francisella tularensis subsp. holarctica (strain LVS).